Consider the following 156-residue polypeptide: MPKGTSSKVLANNKRASFDYAIEDTIEAGLVLTGTEIKSVRKGKISIGDAFVRFDGGEAILWNSNIAHFEQGNRYNHEQLRPRKLLLHKKQIATLMGSVSRDGYTIVPLKIYIKNGYAKCLIGLGRGKKKFDKRDDLKKKDAKRDIDRALRDKQKY.

Residues 130–156 (KFDKRDDLKKKDAKRDIDRALRDKQKY) are disordered. A compositionally biased stretch (basic and acidic residues) spans 132–156 (DKRDDLKKKDAKRDIDRALRDKQKY).

The protein belongs to the SmpB family.

It is found in the cytoplasm. Its function is as follows. Required for rescue of stalled ribosomes mediated by trans-translation. Binds to transfer-messenger RNA (tmRNA), required for stable association of tmRNA with ribosomes. tmRNA and SmpB together mimic tRNA shape, replacing the anticodon stem-loop with SmpB. tmRNA is encoded by the ssrA gene; the 2 termini fold to resemble tRNA(Ala) and it encodes a 'tag peptide', a short internal open reading frame. During trans-translation Ala-aminoacylated tmRNA acts like a tRNA, entering the A-site of stalled ribosomes, displacing the stalled mRNA. The ribosome then switches to translate the ORF on the tmRNA; the nascent peptide is terminated with the 'tag peptide' encoded by the tmRNA and targeted for degradation. The ribosome is freed to recommence translation, which seems to be the essential function of trans-translation. The chain is SsrA-binding protein from Exiguobacterium sibiricum (strain DSM 17290 / CCUG 55495 / CIP 109462 / JCM 13490 / 255-15).